A 734-amino-acid polypeptide reads, in one-letter code: Putative K(+)-stimulated pyrophosphate-energized sodium pump (734 aa).

5 consecutive transmembrane segments (helical) span residues 3 to 23 (SILF…AYYF), 58 to 78 (IVGC…YGFH), 82 to 102 (VWVP…GFLG), 134 to 154 (VMGL…YLLL), and 169 to 189 (LCVI…QALF). Residue lysine 199 participates in substrate binding. Positions 202, 206, 229, and 232 each coordinate Mg(2+). A run of 7 helical transmembrane segments spans residues 244–264 (LYES…AAFI), 275–295 (AVIA…IGIF), 314–334 (FGTN…LWLL), 336–356 (LDNW…GIVI), 377–397 (SGKT…MLST), 398–418 (AIPV…ASGF), and 423–443 (VGMG…TLGI). A Mg(2+)-binding site is contributed by aspartate 455. 4 helical membrane passes run 491–511 (FAIG…IEEI), 557–577 (GMFL…NAVG), 629–649 (ILAP…GLLI), and 650–670 (GGLS…GAWD). Residues aspartate 670, aspartate 696, and aspartate 700 each coordinate Ca(2+). Lysine 703 lines the substrate pocket. A helical transmembrane segment spans residues 712 to 732 (ILIKLMSMVAIVMAGLTVAWS).

It belongs to the H(+)-translocating pyrophosphatase (TC 3.A.10) family. K(+)-stimulated subfamily. In terms of assembly, homodimer. Mg(2+) is required as a cofactor.

The protein localises to the cell inner membrane. It catalyses the reaction Na(+)(in) + diphosphate + H2O = Na(+)(out) + 2 phosphate + H(+). With respect to regulation, requires K(+) for maximal activity. Functionally, sodium pump that utilizes the energy of pyrophosphate hydrolysis as the driving force for Na(+) movement across the membrane. In Bacteroides thetaiotaomicron (strain ATCC 29148 / DSM 2079 / JCM 5827 / CCUG 10774 / NCTC 10582 / VPI-5482 / E50), this protein is Putative K(+)-stimulated pyrophosphate-energized sodium pump.